Consider the following 74-residue polypeptide: Mitochondrial import receptor subunit TOM6 homolog (74 aa).

Residues Met1 to Ala14 show a composition bias toward low complexity. The disordered stretch occupies residues Met1 to Val24. At Ala2 the chain carries N-acetylalanine.

Belongs to the Tom6 family. As to quaternary structure, forms part of the preprotein translocase complex of the outer mitochondrial membrane (TOM complex) which consists of at least 7 different proteins (TOMM5, TOMM6, TOMM7, TOMM20, TOMM22, TOMM40 and TOMM70).

It is found in the mitochondrion outer membrane. This chain is Mitochondrial import receptor subunit TOM6 homolog (TOMM6), found in Bos taurus (Bovine).